Consider the following 398-residue polypeptide: Acetate kinase (398 aa).

Mg(2+) is bound at residue N7. K14 contributes to the ATP binding site. R96 is a binding site for substrate. D153 acts as the Proton donor/acceptor in catalysis. ATP-binding positions include 210–214 (HLGNG), 284–286 (DLR), and 332–336 (GIGEH). Residue E385 coordinates Mg(2+).

The protein belongs to the acetokinase family. In terms of assembly, homodimer. Requires Mg(2+) as cofactor. Mn(2+) is required as a cofactor.

It localises to the cytoplasm. The enzyme catalyses acetate + ATP = acetyl phosphate + ADP. It participates in metabolic intermediate biosynthesis; acetyl-CoA biosynthesis; acetyl-CoA from acetate: step 1/2. Catalyzes the formation of acetyl phosphate from acetate and ATP. Can also catalyze the reverse reaction. In Acaryochloris marina (strain MBIC 11017), this protein is Acetate kinase.